We begin with the raw amino-acid sequence, 91 residues long: MSITTERKQQLIKEYAITENDTGSSAVQCAILTERINNLTEHFKSNHKDHASRRGLLILVGRRRRLLNYIKKNNISEYLELISKLGIRKVK.

Belongs to the universal ribosomal protein uS15 family. As to quaternary structure, part of the 30S ribosomal subunit. Forms a bridge to the 50S subunit in the 70S ribosome, contacting the 23S rRNA.

Functionally, one of the primary rRNA binding proteins, it binds directly to 16S rRNA where it helps nucleate assembly of the platform of the 30S subunit by binding and bridging several RNA helices of the 16S rRNA. Forms an intersubunit bridge (bridge B4) with the 23S rRNA of the 50S subunit in the ribosome. This is Small ribosomal subunit protein uS15 from Rickettsia canadensis (strain McKiel).